The following is a 733-amino-acid chain: Leucine-rich repeat neuronal protein 4 (733 aa).

Positions 1–19 are cleaved as a signal peptide; the sequence is MRWTLMLQLLQLLLQLLMA. Topologically, residues 20 to 676 are extracellular; the sequence is QSQSLERISQ…CATFTTKPSS (657 aa). LRR repeat units lie at residues 62-82, 83-106, 107-128, 130-151, 154-175, 178-199, 207-230, 231-253, 256-278, and 281-302; these read GVTT…CLPR, TLRS…GRLP, ELRV…RDTL, ELRE…AGPS, SLRS…TFAC, ALRL…AFAG, ALEL…RNLP, KLKS…IFKM, NLRQ…IFQD, and NLQV…NSSQ. Residue N70 is glycosylated (N-linked (GlcNAc...) asparagine). The N-linked (GlcNAc...) asparagine glycan is linked to N183. Residues N291, N299, N327, N408, and N469 are each glycosylated (N-linked (GlcNAc...) asparagine). Residues 311–364 enclose the LRRCT domain; sequence NPLICSCELAWLLVDVNKTVLHRAADTMCEPALGSTGPFSGPLSLSHLSNVCRS. A disordered region spans residues 395–423; sequence STALSAQPGGSQQNITKVPSLTMTSPTQG. Residues 480 to 518 form a disordered region; the sequence is KYLEPLPTSPNPRSLPQTKQRTQATPRALHTDPPQDEIP. Residues 490–504 are compositionally biased toward polar residues; sequence NPRSLPQTKQRTQAT. The Fibronectin type-III domain maps to 576–675; sequence TPDPPTLQGV…SCATFTTKPS (100 aa). N619 is a glycosylation site (N-linked (GlcNAc...) asparagine). The chain crosses the membrane as a helical span at residues 677–697; sequence VVIFWGLCTASGLLLVSTLVL. The Cytoplasmic portion of the chain corresponds to 698-733; the sequence is SVCLWRQRWKPHRQFYDTHLVAFKNPARAEEVTQWE.

The protein localises to the membrane. Functionally, may play an important role in hippocampus-dependent long-lasting memory. The polypeptide is Leucine-rich repeat neuronal protein 4 (Lrrn4) (Mus musculus (Mouse)).